A 438-amino-acid polypeptide reads, in one-letter code: Arginine deiminase-like protein (438 aa).

The protein belongs to the arginine deiminase family.

The chain is Arginine deiminase-like protein from Mycoplasma pneumoniae (strain ATCC 29342 / M129 / Subtype 1) (Mycoplasmoides pneumoniae).